The chain runs to 364 residues: Molybdenum import ATP-binding protein ModC (364 aa).

The ABC transporter domain maps to 1 to 229; the sequence is MLLIDIKKQL…PLMRPWLNAS (229 aa). Position 31 to 38 (31 to 38) interacts with ATP; it reads GRSGAGKS. The Mop domain maps to 293–360; that stretch reads HSSIRNILPV…IKGVSVTQSD (68 aa).

It belongs to the ABC transporter superfamily. Molybdate importer (TC 3.A.1.8) family. In terms of assembly, the complex is composed of two ATP-binding proteins (ModC), two transmembrane proteins (ModB) and a solute-binding protein (ModA).

The protein resides in the cell inner membrane. It carries out the reaction molybdate(out) + ATP + H2O = molybdate(in) + ADP + phosphate + H(+). Its function is as follows. Part of the ABC transporter complex ModABC involved in molybdenum import. Responsible for energy coupling to the transport system. The protein is Molybdenum import ATP-binding protein ModC of Aliivibrio fischeri (strain ATCC 700601 / ES114) (Vibrio fischeri).